We begin with the raw amino-acid sequence, 271 residues long: MNSKLSLSTKLSSSGKTQLAEYFAKPPFKVITLPSYDDAWANGLNAMQMSSSPGVLAGDVLEIDISLAKLTALSLNTQAFTRVQAMNEGDSAMQTTHILLAENSRLFYLPHPLVLHKDSVFKQQTHIEMGEQSELIYGEIVAIGRVLNDERFAFRQFSSHLKIYTLQDDGKKRPLVSDCIQWLPSKMNLTALSQMENYSHQGSLTYLNLAKNNAEIKQQVQALQQQSAEEKDLLIGISQLNEYGLMVRVLGCRAEQIQKLFEKIGRLLKSV.

This sequence belongs to the UreD family. UreD, UreF and UreG form a complex that acts as a GTP-hydrolysis-dependent molecular chaperone, activating the urease apoprotein by helping to assemble the nickel containing metallocenter of UreC. The UreE protein probably delivers the nickel.

The protein resides in the cytoplasm. Required for maturation of urease via the functional incorporation of the urease nickel metallocenter. The sequence is that of Urease accessory protein UreD from Haemophilus influenzae (strain PittEE).